A 484-amino-acid chain; its full sequence is Glycogen synthase 2 (484 aa).

Position 15 (Arg-15) interacts with ADP-alpha-D-glucose.

Belongs to the glycosyltransferase 1 family. Bacterial/plant glycogen synthase subfamily.

The enzyme catalyses [(1-&gt;4)-alpha-D-glucosyl](n) + ADP-alpha-D-glucose = [(1-&gt;4)-alpha-D-glucosyl](n+1) + ADP + H(+). It functions in the pathway glycan biosynthesis; glycogen biosynthesis. Functionally, synthesizes alpha-1,4-glucan chains using ADP-glucose. The protein is Glycogen synthase 2 of Geobacter sulfurreducens (strain ATCC 51573 / DSM 12127 / PCA).